A 349-amino-acid polypeptide reads, in one-letter code: UPF0284 protein MA_3887 (349 aa).

It belongs to the UPF0284 family.

In Methanosarcina acetivorans (strain ATCC 35395 / DSM 2834 / JCM 12185 / C2A), this protein is UPF0284 protein MA_3887.